A 352-amino-acid chain; its full sequence is Thiosulfate transporter TsuA (352 aa).

A helical membrane pass occupies residues 1 to 21; sequence MFSMILSGLICGALLGFVMQR. At 22–44 the chain is on the cytoplasmic side; the sequence is GRFCLTGGFRDMYIVKNNRMFYA. Residues 45–65 form a helical membrane-spanning segment; that stretch reads LLIAISVQSVGVFALIQAGLL. The Periplasmic segment spans residues 66–70; sequence TYEAG. Residues 71-91 traverse the membrane as a helical segment; the sequence is AFPWLGTVIGGYIFGLGIVLA. Residues 92 to 102 lie on the Cytoplasmic side of the membrane; it reads GGCATGTWYRA. A helical transmembrane segment spans residues 103–123; it reads GEGLIGSWIALFTYMVMSAVM. The Periplasmic segment spans residues 124–148; sequence RSPHASGLNQTLQHYSTEHNSIAET. A helical membrane pass occupies residues 149–169; sequence FNLSVWPLVAVLLVITLWVVM. At 170–197 the chain is on the cytoplasmic side; sequence KELKKPKLKVATLPPRRTGIAHILFEKR. A helical transmembrane segment spans residues 198 to 218; it reads WHPFVTAVLIGLIALLAWPLS. Residues 219-247 are Periplasmic-facing; it reads EATGRMFGLGITSPTANILQFLVAGDMKY. A helical membrane pass occupies residues 248 to 268; it reads INWGVFLVLGIFVGSFIAAKA. Over 269 to 289 the chain is Cytoplasmic; that stretch reads SREFRVRAADAQTTLRSGLGG. The helical transmembrane segment at 290–310 threads the bilayer; the sequence is VLMGFGASIAGGCSIGNGLVM. The Periplasmic portion of the chain corresponds to 311-317; it reads TAMMTWQ. A helical membrane pass occupies residues 318 to 338; sequence GWIGLVFMILGVWTASWLVYV. Residues 339–352 are Cytoplasmic-facing; the sequence is RPQRKARLATAAAN.

It belongs to the TsuA/YedE (TC 9.B.102) family.

The protein resides in the cell inner membrane. It catalyses the reaction thiosulfate(in) = thiosulfate(out). Its function is as follows. Mediates thiosulfate uptake. The polypeptide is Thiosulfate transporter TsuA (Escherichia coli (strain K12)).